The chain runs to 72 residues: Small ribosomal subunit protein bS18c (72 aa).

The protein belongs to the bacterial ribosomal protein bS18 family. As to quaternary structure, part of the 30S ribosomal subunit.

The protein localises to the plastid. The protein resides in the chloroplast. This chain is Small ribosomal subunit protein bS18c, found in Phaeodactylum tricornutum (strain CCAP 1055/1).